We begin with the raw amino-acid sequence, 317 residues long: L-lactate dehydrogenase (317 aa).

Residues valine 17, aspartate 38, lysine 43, tyrosine 69, and 83 to 84 contribute to the NAD(+) site; that span reads GA. Positions 86 and 92 each coordinate substrate. NAD(+) contacts are provided by residues serine 105, 122 to 124, and serine 147; that span reads ATN. Position 124–127 (124–127) interacts with substrate; sequence NPVD. Residue 152–155 coordinates substrate; it reads DTAR. Arginine 157 and histidine 172 together coordinate beta-D-fructose 1,6-bisphosphate. Catalysis depends on histidine 179, which acts as the Proton acceptor. Residue tyrosine 224 is modified to Phosphotyrosine. Residue threonine 233 coordinates substrate.

It belongs to the LDH/MDH superfamily. LDH family. Homotetramer.

It localises to the cytoplasm. The catalysed reaction is (S)-lactate + NAD(+) = pyruvate + NADH + H(+). Its pathway is fermentation; pyruvate fermentation to lactate; (S)-lactate from pyruvate: step 1/1. With respect to regulation, allosterically activated by fructose 1,6-bisphosphate (FBP). Its function is as follows. Catalyzes the conversion of lactate to pyruvate. In Geobacillus thermodenitrificans (strain NG80-2), this protein is L-lactate dehydrogenase.